The primary structure comprises 412 residues: 43 kDa receptor-associated protein of the synapse (412 aa).

Gly-2 carries N-myristoyl glycine lipidation. TPR repeat units lie at residues 6–39 (TKQQ…SSDL), 83–116 (LESY…PGTR), 123–156 (GQVS…AHNN), 163–196 (CRVC…VNNY), 206–239 (AMSQ…ALQH), 246–279 (ALCL…MTEI), and 286–319 (VQAL…AEEV). Tyr-196 is subject to Phosphotyrosine. The RING-type zinc finger occupies 363 to 403 (CGLCGESIGEKNSRLQALPCSHIFHLRCLQNNGTRSCPNCR). Ser-405 is subject to Phosphoserine.

The protein belongs to the RAPsyn family. Ubiquitinated by the BCR(KLHL8) complex, leading to its degradation.

It is found in the cell membrane. It localises to the postsynaptic cell membrane. Its subcellular location is the cytoplasm. The protein resides in the cytoskeleton. Postsynaptic protein required for clustering of nicotinic acetylcholine receptors (nAChRs) at the neuromuscular junction. It may link the receptor to the underlying postsynaptic cytoskeleton, possibly by direct association with actin or spectrin. The polypeptide is 43 kDa receptor-associated protein of the synapse (RAPSN) (Homo sapiens (Human)).